The chain runs to 140 residues: Large ribosomal subunit protein uL11 (140 aa).

It belongs to the universal ribosomal protein uL11 family. As to quaternary structure, part of the ribosomal stalk of the 50S ribosomal subunit. Interacts with L10 and the large rRNA to form the base of the stalk. L10 forms an elongated spine to which L12 dimers bind in a sequential fashion forming a multimeric L10(L12)X complex. One or more lysine residues are methylated.

Functionally, forms part of the ribosomal stalk which helps the ribosome interact with GTP-bound translation factors. This chain is Large ribosomal subunit protein uL11, found in Staphylococcus saprophyticus subsp. saprophyticus (strain ATCC 15305 / DSM 20229 / NCIMB 8711 / NCTC 7292 / S-41).